A 131-amino-acid chain; its full sequence is UPF0102 protein YraN (131 aa).

Over residues 1 to 19 (MATVPTRSGSPRQLTTKQT) the composition is skewed to polar residues. Residues 1 to 20 (MATVPTRSGSPRQLTTKQTG) are disordered.

It belongs to the UPF0102 family.

The polypeptide is UPF0102 protein YraN (Shigella boydii serotype 18 (strain CDC 3083-94 / BS512)).